The primary structure comprises 510 residues: Peptide transporter imqJ (510 aa).

A run of 3 helical transmembrane segments spans residues 1-21, 31-51, and 57-77; these read MVNQAFMLWCYITPVLGAVVA, IIFSSSVYLCGLVTLFLSSLP, and GISLPGLLVSLFLIGIGTGGI. Residue N80 is glycosylated (N-linked (GlcNAc...) asparagine). 4 consecutive transmembrane segments (helical) span residues 116 to 136, 143 to 163, 231 to 251, and 269 to 289; these read IFTTFFLYINIGSFSPLLITI, FSAAFSLSAITFSIGFIIVLV, IFILYPIYWAAYSQFLTNFIS, and IDPITVLILLPVLDRIVFPFL. Positions 348 to 468 constitute a Fe2OG dioxygenase domain; it reads PAASEIRLLY…RCSSVFFFKA (121 aa). 2 residues coordinate Fe cation: H377 and D379. N421 carries N-linked (GlcNAc...) asparagine glycosylation. Position 439 (H439) interacts with Fe cation. Residue R459 coordinates 2-oxoglutarate.

The protein belongs to the major facilitator superfamily. Proton-dependent oligopeptide transporter (POT/PTR) (TC 2.A.17) family.

It is found in the membrane. In terms of biological role, peptide transporter; part of the gene cluster that mediates the biosynthesis of imizoquins A to D, tripeptide-derived alkaloids that serve a protective role against oxidative stress that are essential for normal germination. The protein is Peptide transporter imqJ of Aspergillus flavus (strain ATCC 200026 / FGSC A1120 / IAM 13836 / NRRL 3357 / JCM 12722 / SRRC 167).